The sequence spans 627 residues: tRNA uridine 5-carboxymethylaminomethyl modification enzyme MnmG (627 aa).

FAD contacts are provided by residues 16 to 21, Val128, and Ser183; that span reads GAGHAG. 277 to 291 is a binding site for NAD(+); it reads GPRYCPSIEDKIVRF. Gln374 provides a ligand contact to FAD.

This sequence belongs to the MnmG family. Homodimer. Heterotetramer of two MnmE and two MnmG subunits. The cofactor is FAD.

The protein resides in the cytoplasm. NAD-binding protein involved in the addition of a carboxymethylaminomethyl (cmnm) group at the wobble position (U34) of certain tRNAs, forming tRNA-cmnm(5)s(2)U34. In Finegoldia magna (strain ATCC 29328 / DSM 20472 / WAL 2508) (Peptostreptococcus magnus), this protein is tRNA uridine 5-carboxymethylaminomethyl modification enzyme MnmG.